The chain runs to 84 residues: Small ribosomal subunit protein uS17 (84 aa).

The protein belongs to the universal ribosomal protein uS17 family. Part of the 30S ribosomal subunit.

One of the primary rRNA binding proteins, it binds specifically to the 5'-end of 16S ribosomal RNA. The polypeptide is Small ribosomal subunit protein uS17 (Serratia proteamaculans (strain 568)).